The chain runs to 455 residues: Ribulose bisphosphate carboxylase large chain (455 aa).

Lys5 carries the post-translational modification N6,N6,N6-trimethyllysine. Substrate is bound by residues Asn114 and Thr164. Catalysis depends on Lys166, which acts as the Proton acceptor. Position 168 (Lys168) interacts with substrate. The Mg(2+) site is built by Lys192, Asp194, and Glu195. At Lys192 the chain carries N6-carboxylysine. His285 acts as the Proton acceptor in catalysis. Substrate-binding residues include Arg286, His318, and Ser370.

Belongs to the RuBisCO large chain family. Type I subfamily. As to quaternary structure, heterohexadecamer of 8 large chains and 8 small chains; disulfide-linked. The disulfide link is formed within the large subunit homodimers. It depends on Mg(2+) as a cofactor. In terms of processing, the disulfide bond which can form in the large chain dimeric partners within the hexadecamer appears to be associated with oxidative stress and protein turnover.

It localises to the plastid. The protein localises to the chloroplast. The catalysed reaction is 2 (2R)-3-phosphoglycerate + 2 H(+) = D-ribulose 1,5-bisphosphate + CO2 + H2O. It carries out the reaction D-ribulose 1,5-bisphosphate + O2 = 2-phosphoglycolate + (2R)-3-phosphoglycerate + 2 H(+). RuBisCO catalyzes two reactions: the carboxylation of D-ribulose 1,5-bisphosphate, the primary event in carbon dioxide fixation, as well as the oxidative fragmentation of the pentose substrate in the photorespiration process. Both reactions occur simultaneously and in competition at the same active site. This is Ribulose bisphosphate carboxylase large chain from Brownea coccinea (Rose of Venezuela).